A 125-amino-acid polypeptide reads, in one-letter code: Small ribosomal subunit protein uS13 (125 aa).

This sequence belongs to the universal ribosomal protein uS13 family. Part of the 30S ribosomal subunit. Forms a loose heterodimer with protein S19. Forms two bridges to the 50S subunit in the 70S ribosome.

Located at the top of the head of the 30S subunit, it contacts several helices of the 16S rRNA. In the 70S ribosome it contacts the 23S rRNA (bridge B1a) and protein L5 of the 50S subunit (bridge B1b), connecting the 2 subunits; these bridges are implicated in subunit movement. Contacts the tRNAs in the A and P-sites. The chain is Small ribosomal subunit protein uS13 from Rickettsia typhi (strain ATCC VR-144 / Wilmington).